The following is a 433-amino-acid chain: G-protein coupled receptor 22 (433 aa).

The Extracellular portion of the chain corresponds to 1–45; it reads MCFSPILEINMQSESNITVRDDIDDINTNMYQPLSYPLSFQVSLT. Asn-16 is a glycosylation site (N-linked (GlcNAc...) asparagine). A helical transmembrane segment spans residues 46–66; that stretch reads GFLMLEIVLGLGSNLTVLVLY. Topologically, residues 67 to 85 are cytoplasmic; it reads CMKSNLINSVSNIITMNLH. A helical membrane pass occupies residues 86-106; that stretch reads VLDVIICVGCIPLTIVILLLS. Residues 107 to 115 lie on the Extracellular side of the membrane; it reads LESNTALIC. Residues 116–136 form a helical membrane-spanning segment; it reads CFHEACVSFASVSTAINVFAI. Residues 137–156 are Cytoplasmic-facing; the sequence is TLDRYDISVKPANRILTMGR. The chain crosses the membrane as a helical span at residues 157–177; sequence AVMLMISIWIFSFFSFLIPFI. Topologically, residues 178–208 are extracellular; it reads EVNFFSLQSGNTWENKTLLCVSTNEYYTELG. An N-linked (GlcNAc...) asparagine glycan is attached at Asn-192. The chain crosses the membrane as a helical span at residues 209–229; sequence MYYHLLVQIPIFFFTVVVMLI. Residues 230 to 315 are Cytoplasmic-facing; sequence TYTKILQALN…ERQKRVFRMS (86 aa). The chain crosses the membrane as a helical span at residues 316–336; it reads LLIISTFLLCWTPISVLNTTI. At 337-349 the chain is on the extracellular side; the sequence is LCLGPSDLLVKLR. Residues 350 to 370 traverse the membrane as a helical segment; the sequence is LCFLVMAYGTTIFHPLLYAFT. Residues 371–433 are Cytoplasmic-facing; that stretch reads RQKFQKVLKS…KCLVPQVVTD (63 aa).

Belongs to the G-protein coupled receptor 1 family. In terms of tissue distribution, high expression in adult and fetal heart tissue. Expressed in the brain, with enrichment in the accumbens, amygdala, cerebellum, cortex, and hippocampus regions.

The protein resides in the cell membrane. Orphan G-protein coupled receptor. Seems to act through a G(i)/G(o) mediated pathway. May be involved in ciliogenesis. The sequence is that of G-protein coupled receptor 22 from Homo sapiens (Human).